Here is a 441-residue protein sequence, read N- to C-terminus: Cysteine desulfurase, mitosomal (441 aa).

Pyridoxal 5'-phosphate is bound by residues 107–108 (AT), Asn-189, Gln-217, and 237–239 (SGH). At Lys-240 the chain carries N6-(pyridoxal phosphate)lysine. Pyridoxal 5'-phosphate is bound at residue Thr-277. Cys-367 serves as the catalytic Cysteine persulfide intermediate. Residue Cys-367 participates in [2Fe-2S] cluster binding.

The protein belongs to the class-V pyridoxal-phosphate-dependent aminotransferase family. NifS/IscS subfamily. In terms of assembly, interacts with ISD11. The cofactor is pyridoxal 5'-phosphate.

The protein resides in the mitosome. It carries out the reaction (sulfur carrier)-H + L-cysteine = (sulfur carrier)-SH + L-alanine. Functionally, catalyzes the removal of elemental sulfur from cysteine to produce alanine. It supplies the inorganic sulfur for iron-sulfur (Fe-S) clusters in mitosomes. This chain is Cysteine desulfurase, mitosomal, found in Trachipleistophora hominis (Microsporidian parasite).